The sequence spans 548 residues: Phenylalanine--tRNA ligase beta subunit (548 aa).

Positions 271–346 constitute a B5 domain; it reads LSEAAAKLDP…ISIGYEALGP (76 aa). Mg(2+) is bound by residues aspartate 324, aspartate 330, glutamate 333, and aspartate 334.

The protein belongs to the phenylalanyl-tRNA synthetase beta subunit family. Type 2 subfamily. Tetramer of two alpha and two beta subunits. It depends on Mg(2+) as a cofactor.

It localises to the cytoplasm. The enzyme catalyses tRNA(Phe) + L-phenylalanine + ATP = L-phenylalanyl-tRNA(Phe) + AMP + diphosphate + H(+). This Aeropyrum pernix (strain ATCC 700893 / DSM 11879 / JCM 9820 / NBRC 100138 / K1) protein is Phenylalanine--tRNA ligase beta subunit.